We begin with the raw amino-acid sequence, 385 residues long: Ribosomal RNA large subunit methyltransferase G (385 aa).

It belongs to the methyltransferase superfamily. RlmG family.

It is found in the cytoplasm. The catalysed reaction is guanosine(1835) in 23S rRNA + S-adenosyl-L-methionine = N(2)-methylguanosine(1835) in 23S rRNA + S-adenosyl-L-homocysteine + H(+). Specifically methylates the guanine in position 1835 (m2G1835) of 23S rRNA. The sequence is that of Ribosomal RNA large subunit methyltransferase G from Vibrio parahaemolyticus serotype O3:K6 (strain RIMD 2210633).